A 367-amino-acid polypeptide reads, in one-letter code: 5-amino-6-(D-ribitylamino)uracil--L-tyrosine 4-hydroxyphenyl transferase (367 aa).

The Radical SAM core domain occupies 56 to 290; it reads VTYVRNQNIN…MFAVARLFLD (235 aa). Positions 70, 74, and 77 each coordinate [4Fe-4S] cluster.

This sequence belongs to the radical SAM superfamily. CofH family. As to quaternary structure, consists of two subunits, CofG and CofH. The cofactor is [4Fe-4S] cluster.

The catalysed reaction is 5-amino-6-(D-ribitylamino)uracil + L-tyrosine + S-adenosyl-L-methionine = 5-amino-5-(4-hydroxybenzyl)-6-(D-ribitylimino)-5,6-dihydrouracil + 2-iminoacetate + 5'-deoxyadenosine + L-methionine + H(+). Its pathway is cofactor biosynthesis; coenzyme F0 biosynthesis. Functionally, catalyzes the radical-mediated synthesis of 5-amino-5-(4-hydroxybenzyl)-6-(D-ribitylimino)-5,6-dihydrouracil from 5-amino-6-(D-ribitylamino)uracil and L-tyrosine. This is 5-amino-6-(D-ribitylamino)uracil--L-tyrosine 4-hydroxyphenyl transferase from Methanoculleus marisnigri (strain ATCC 35101 / DSM 1498 / JR1).